Here is a 208-residue protein sequence, read N- to C-terminus: Small ribosomal subunit protein uS4 (208 aa).

An S4 RNA-binding domain is found at 98–161; the sequence is RRLDNVIYRM…KELEIIKESL (64 aa).

Belongs to the universal ribosomal protein uS4 family. Part of the 30S ribosomal subunit. Contacts protein S5. The interaction surface between S4 and S5 is involved in control of translational fidelity.

Its function is as follows. One of the primary rRNA binding proteins, it binds directly to 16S rRNA where it nucleates assembly of the body of the 30S subunit. In terms of biological role, with S5 and S12 plays an important role in translational accuracy. This is Small ribosomal subunit protein uS4 from Thermodesulfovibrio yellowstonii (strain ATCC 51303 / DSM 11347 / YP87).